Reading from the N-terminus, the 558-residue chain is Formate--tetrahydrofolate ligase (558 aa).

Residue 66 to 73 (TPAGEGKT) participates in ATP binding.

This sequence belongs to the formate--tetrahydrofolate ligase family.

The catalysed reaction is (6S)-5,6,7,8-tetrahydrofolate + formate + ATP = (6R)-10-formyltetrahydrofolate + ADP + phosphate. It functions in the pathway one-carbon metabolism; tetrahydrofolate interconversion. This chain is Formate--tetrahydrofolate ligase, found in Neisseria meningitidis serogroup B (strain ATCC BAA-335 / MC58).